The sequence spans 89 residues: Exodeoxyribonuclease 7 small subunit (89 aa).

A disordered region spans residues 1 to 23 (MRPWRCVSMAKAPAAPSSTQPDP).

It belongs to the XseB family. In terms of assembly, heterooligomer composed of large and small subunits.

It is found in the cytoplasm. The catalysed reaction is Exonucleolytic cleavage in either 5'- to 3'- or 3'- to 5'-direction to yield nucleoside 5'-phosphates.. Functionally, bidirectionally degrades single-stranded DNA into large acid-insoluble oligonucleotides, which are then degraded further into small acid-soluble oligonucleotides. This is Exodeoxyribonuclease 7 small subunit from Acidovorax sp. (strain JS42).